Consider the following 62-residue polypeptide: uncharacterized protein (62 aa).

Residues 1–13 (MGESKSPQESSSE) show a composition bias toward polar residues. The segment at 1–62 (MGESKSPQES…SRREFRRKSG (62 aa)) is disordered. Positions 14–28 (GETKRKFREALDRKM) are enriched in basic and acidic residues.

This is an uncharacterized protein from Mycobacterium tuberculosis (strain ATCC 25618 / H37Rv).